The sequence spans 245 residues: UPF0328 protein ECU09_2010 (245 aa).

Belongs to the UPF0328 family.

The protein is UPF0328 protein ECU09_2010 of Encephalitozoon cuniculi (strain GB-M1) (Microsporidian parasite).